Consider the following 413-residue polypeptide: Extracellular sucrase (413 aa).

The active-site Nucleophile is aspartate 44. The Proton donor/acceptor role is filled by glutamate 276.

This sequence belongs to the glycosyl hydrolase 68 family.

The protein localises to the secreted. The enzyme catalyses Hydrolysis of terminal non-reducing beta-D-fructofuranoside residues in beta-D-fructofuranosides.. The polypeptide is Extracellular sucrase (sacC) (Zymomonas mobilis subsp. mobilis (strain ATCC 10988 / DSM 424 / LMG 404 / NCIMB 8938 / NRRL B-806 / ZM1)).